A 457-amino-acid chain; its full sequence is MDHLPIFCQLRDRDCLIVGGGDVAERKARLLLDAGARLTVNALAFIPQFTAWADAGMLTLVEGPFDESLLDTCWLAIAATDDDALNQRVSEAAEARRIFCNVVDAPKAASFIMPSIIDRSPLMVAVSSGGTSPVLARLLREKLESLLPLHLGQVAKYAGQLRGRVKQQFATMGERRRFWEKLFVNDRLAQSLANNDQKAITETTEQLINEPLDHRGEVVLVGAGPGDAGLLTLKGLQQIQQADVVVYDRLVSDDIMNLVRRDADRVFVGKRAGYHCVPQEEINQILLREAQKGKRVVRLKGGDPFIFGRGGEELETLCNAGIPFSVVPGITAASGCSAYSGIPLTHRDYAQSVRLITGHLKTGGELDWENLAAEKQTLVFYMGLNQAATIQQKLIEYGMPGEMPVAIVENGTAVTQRVIDGTLTQLGELAQQMNSPSLIIIGRVVGLRDKLNWFSNH.

The precorrin-2 dehydrogenase /sirohydrochlorin ferrochelatase stretch occupies residues Met1–Thr204. NAD(+) is bound by residues Asp22–Val23 and Leu43–Ala44. Ser128 bears the Phosphoserine mark. The tract at residues Gly216–His457 is uroporphyrinogen-III C-methyltransferase. Pro225 contacts S-adenosyl-L-methionine. The active-site Proton acceptor is Asp248. The active-site Proton donor is Lys270. Residues Gly301–Asp303, Ile306, Thr331–Ala332, Met382, and Gly411 contribute to the S-adenosyl-L-methionine site.

This sequence in the N-terminal section; belongs to the precorrin-2 dehydrogenase / sirohydrochlorin ferrochelatase family. The protein in the C-terminal section; belongs to the precorrin methyltransferase family.

It catalyses the reaction uroporphyrinogen III + 2 S-adenosyl-L-methionine = precorrin-2 + 2 S-adenosyl-L-homocysteine + H(+). The enzyme catalyses precorrin-2 + NAD(+) = sirohydrochlorin + NADH + 2 H(+). The catalysed reaction is siroheme + 2 H(+) = sirohydrochlorin + Fe(2+). It functions in the pathway cofactor biosynthesis; adenosylcobalamin biosynthesis; precorrin-2 from uroporphyrinogen III: step 1/1. It participates in cofactor biosynthesis; adenosylcobalamin biosynthesis; sirohydrochlorin from precorrin-2: step 1/1. Its pathway is porphyrin-containing compound metabolism; siroheme biosynthesis; precorrin-2 from uroporphyrinogen III: step 1/1. The protein operates within porphyrin-containing compound metabolism; siroheme biosynthesis; siroheme from sirohydrochlorin: step 1/1. It functions in the pathway porphyrin-containing compound metabolism; siroheme biosynthesis; sirohydrochlorin from precorrin-2: step 1/1. Multifunctional enzyme that catalyzes the SAM-dependent methylations of uroporphyrinogen III at position C-2 and C-7 to form precorrin-2 via precorrin-1. Then it catalyzes the NAD-dependent ring dehydrogenation of precorrin-2 to yield sirohydrochlorin. Finally, it catalyzes the ferrochelation of sirohydrochlorin to yield siroheme. This is Siroheme synthase from Escherichia coli O6:H1 (strain CFT073 / ATCC 700928 / UPEC).